We begin with the raw amino-acid sequence, 335 residues long: Beta-ketoacyl-[acyl-carrier-protein] synthase III (335 aa).

Residues C117 and H258 contribute to the active site. The segment at 259–263 (QANQR) is ACP-binding. N288 is a catalytic residue.

The protein belongs to the thiolase-like superfamily. FabH family. In terms of assembly, homodimer.

The protein resides in the cytoplasm. The enzyme catalyses malonyl-[ACP] + acetyl-CoA + H(+) = 3-oxobutanoyl-[ACP] + CO2 + CoA. It participates in lipid metabolism; fatty acid biosynthesis. In terms of biological role, catalyzes the condensation reaction of fatty acid synthesis by the addition to an acyl acceptor of two carbons from malonyl-ACP. Catalyzes the first condensation reaction which initiates fatty acid synthesis and may therefore play a role in governing the total rate of fatty acid production. Possesses both acetoacetyl-ACP synthase and acetyl transacylase activities. Its substrate specificity determines the biosynthesis of branched-chain and/or straight-chain of fatty acids. The sequence is that of Beta-ketoacyl-[acyl-carrier-protein] synthase III from Synechococcus elongatus (strain ATCC 33912 / PCC 7942 / FACHB-805) (Anacystis nidulans R2).